The chain runs to 775 residues: Mitosis inducer protein kinase cdr2 (775 aa).

Residues W10–L262 form the Protein kinase domain. Residues L16–S24 and K39 each bind ATP. D133 acts as the Proton acceptor in catalysis. 3 positions are modified to phosphoserine: S309, S311, and S476. Over residues N549–A563 the composition is skewed to low complexity. Positions N549–F620 are disordered. Residues L584–S593 are compositionally biased toward polar residues. 2 positions are modified to phosphoserine: S587 and S632.

This sequence belongs to the protein kinase superfamily. CAMK Ser/Thr protein kinase family. NIM1 subfamily. Interacts with blt1 and mid1. Post-translationally, autophosphorylated.

The enzyme catalyses L-seryl-[protein] + ATP = O-phospho-L-seryl-[protein] + ADP + H(+). The catalysed reaction is L-threonyl-[protein] + ATP = O-phospho-L-threonyl-[protein] + ADP + H(+). Acts as a mitotic inducer. In G2 it negatively regulates wee1, a mitotic inhibitor. Also has a role in cytokinesis where it required for proper septum formation. This chain is Mitosis inducer protein kinase cdr2 (cdr2), found in Schizosaccharomyces pombe (strain 972 / ATCC 24843) (Fission yeast).